The sequence spans 69 residues: DNA gyrase inhibitor YacG (69 aa).

Cys9, Cys12, Cys28, and Cys32 together coordinate Zn(2+). Residues 48-69 are disordered; sequence PVSPDAEDELFSGDLEAPHRGH.

This sequence belongs to the DNA gyrase inhibitor YacG family. As to quaternary structure, interacts with GyrB. Requires Zn(2+) as cofactor.

Functionally, inhibits all the catalytic activities of DNA gyrase by preventing its interaction with DNA. Acts by binding directly to the C-terminal domain of GyrB, which probably disrupts DNA binding by the gyrase. This chain is DNA gyrase inhibitor YacG, found in Pseudomonas syringae pv. syringae (strain B728a).